Here is a 141-residue protein sequence, read N- to C-terminus: Nucleoside diphosphate kinase (141 aa).

Residues K11, F59, R87, T93, R104, and N114 each contribute to the ATP site. H117 serves as the catalytic Pros-phosphohistidine intermediate.

Belongs to the NDK family. As to quaternary structure, homotetramer. It depends on Mg(2+) as a cofactor.

The protein resides in the cytoplasm. It catalyses the reaction a 2'-deoxyribonucleoside 5'-diphosphate + ATP = a 2'-deoxyribonucleoside 5'-triphosphate + ADP. The enzyme catalyses a ribonucleoside 5'-diphosphate + ATP = a ribonucleoside 5'-triphosphate + ADP. Functionally, major role in the synthesis of nucleoside triphosphates other than ATP. The ATP gamma phosphate is transferred to the NDP beta phosphate via a ping-pong mechanism, using a phosphorylated active-site intermediate. The sequence is that of Nucleoside diphosphate kinase from Acidovorax ebreus (strain TPSY) (Diaphorobacter sp. (strain TPSY)).